The chain runs to 326 residues: Aspartate carbamoyltransferase catalytic subunit (326 aa).

The carbamoyl phosphate site is built by arginine 65 and threonine 66. Lysine 93 lines the L-aspartate pocket. Residues arginine 115, histidine 143, and glutamine 146 each contribute to the carbamoyl phosphate site. L-aspartate-binding residues include arginine 176 and arginine 230. Residues glycine 271 and proline 272 each contribute to the carbamoyl phosphate site.

This sequence belongs to the aspartate/ornithine carbamoyltransferase superfamily. ATCase family. As to quaternary structure, heterododecamer (2C3:3R2) of six catalytic PyrB chains organized as two trimers (C3), and six regulatory PyrI chains organized as three dimers (R2).

It carries out the reaction carbamoyl phosphate + L-aspartate = N-carbamoyl-L-aspartate + phosphate + H(+). It functions in the pathway pyrimidine metabolism; UMP biosynthesis via de novo pathway; (S)-dihydroorotate from bicarbonate: step 2/3. Its function is as follows. Catalyzes the condensation of carbamoyl phosphate and aspartate to form carbamoyl aspartate and inorganic phosphate, the committed step in the de novo pyrimidine nucleotide biosynthesis pathway. The protein is Aspartate carbamoyltransferase catalytic subunit of Mesorhizobium japonicum (strain LMG 29417 / CECT 9101 / MAFF 303099) (Mesorhizobium loti (strain MAFF 303099)).